Reading from the N-terminus, the 113-residue chain is Dolichyl-diphosphooligosaccharide--protein glycosyltransferase subunit dad-1 (113 aa).

Residues 1–32 (MAAQVVPVLSKLFDDYQKTTSSKLKIIDAYMT) lie on the Cytoplasmic side of the membrane. Residues 33-53 (YILFTGIFQFIYCLLVGTFPF) form a helical membrane-spanning segment. Topologically, residues 54-55 (NS) are lumenal. The helical transmembrane segment at 56 to 78 (FLSGFISTVTSFVLASCLRMQVN) threads the bilayer. Topologically, residues 79–92 (QENRSEFTAVSTER) are cytoplasmic. A helical membrane pass occupies residues 93–113 (AFADFIFANLILHLVVVNFLG).

Belongs to the DAD/OST2 family. As to quaternary structure, component of the oligosaccharyltransferase (OST) complex.

It is found in the endoplasmic reticulum membrane. Its pathway is protein modification; protein glycosylation. Functionally, subunit of the oligosaccharyl transferase (OST) complex that catalyzes the initial transfer of a defined glycan (Glc(3)Man(9)GlcNAc(2) in eukaryotes) from the lipid carrier dolichol-pyrophosphate to an asparagine residue within an Asn-X-Ser/Thr consensus motif in nascent polypeptide chains, the first step in protein N-glycosylation. N-glycosylation occurs cotranslationally and the complex associates with the Sec61 complex at the channel-forming translocon complex that mediates protein translocation across the endoplasmic reticulum (ER). All subunits are required for a maximal enzyme activity. Possesses cell death-inhibiting activity. Suppresses some programmed cell death in C.elegans. This Caenorhabditis elegans protein is Dolichyl-diphosphooligosaccharide--protein glycosyltransferase subunit dad-1.